Reading from the N-terminus, the 704-residue chain is Elongation factor G (704 aa).

The tr-type G domain maps to 10–290 (NKVRNIGIMA…AVIDYLPSPL (281 aa)). GTP contacts are provided by residues 19–26 (AHIDAGKT), 83–87 (DTPGH), and 137–140 (NKMD).

Belongs to the TRAFAC class translation factor GTPase superfamily. Classic translation factor GTPase family. EF-G/EF-2 subfamily.

Its subcellular location is the cytoplasm. Its function is as follows. Catalyzes the GTP-dependent ribosomal translocation step during translation elongation. During this step, the ribosome changes from the pre-translocational (PRE) to the post-translocational (POST) state as the newly formed A-site-bound peptidyl-tRNA and P-site-bound deacylated tRNA move to the P and E sites, respectively. Catalyzes the coordinated movement of the two tRNA molecules, the mRNA and conformational changes in the ribosome. The sequence is that of Elongation factor G from Clavibacter sepedonicus (Clavibacter michiganensis subsp. sepedonicus).